Reading from the N-terminus, the 209-residue chain is Mediator of RNA polymerase II transcription subunit 20 (209 aa).

The protein belongs to the Mediator complex subunit 20 family. As to quaternary structure, component of the Mediator complex.

The protein resides in the nucleus. Component of the Mediator complex, a coactivator involved in the regulated transcription of nearly all RNA polymerase II-dependent genes. Mediator functions as a bridge to convey information from gene-specific regulatory proteins to the basal RNA polymerase II transcription machinery. Mediator is recruited to promoters by direct interactions with regulatory proteins and serves as a scaffold for the assembly of a functional preinitiation complex with RNA polymerase II and the general transcription factors. The sequence is that of Mediator of RNA polymerase II transcription subunit 20 (SRB2) from Eremothecium gossypii (strain ATCC 10895 / CBS 109.51 / FGSC 9923 / NRRL Y-1056) (Yeast).